The sequence spans 82 residues: uncharacterized protein (82 aa).

The next 3 helical transmembrane spans lie at 4 to 26, 31 to 50, and 55 to 77; these read IAVLFIVFGFPIVAGVFGIAGHF, FWVAPLIVLITSLILLVTLA, and SFIFWVVMYTAIALVTSVATLFL.

It is found in the cell membrane. This is an uncharacterized protein from Bacillus subtilis (strain 168).